Here is an 80-residue protein sequence, read N- to C-terminus: Exodeoxyribonuclease 7 small subunit (80 aa).

This sequence belongs to the XseB family. In terms of assembly, heterooligomer composed of large and small subunits.

It is found in the cytoplasm. The enzyme catalyses Exonucleolytic cleavage in either 5'- to 3'- or 3'- to 5'-direction to yield nucleoside 5'-phosphates.. Bidirectionally degrades single-stranded DNA into large acid-insoluble oligonucleotides, which are then degraded further into small acid-soluble oligonucleotides. In Klebsiella pneumoniae (strain 342), this protein is Exodeoxyribonuclease 7 small subunit.